The following is a 314-amino-acid chain: MPIRIDKKLPAVEILRTENIFVMDDQRAAHQDIRPLKILILNLMPQKMVTETQLLRHLANTPLQLDIDFLYMESHRSKTTRSEHMETFYKTFLEVKDEYFDGMIITGAPVEHLPFEEVDYWEEFRQMLEWSKTHVYSTLHICWGAQAGLYLRYGVEKYQMDSKLSGIYPQDTLKEGHLLFRGFDDSYVSPHSRHTEISKEEVLNKTNLEILSEGPQVGVSILASRDLREIYSFGHLEYDRDTLAKEYFRDRDAGFDPHIPENYFKDDDVNQVPCLCWSSSAALFFSNWVNHAVYQETPFXWRKIXDDASAYGYL.

Cys142 (acyl-thioester intermediate) is an active-site residue. 2 residues coordinate substrate: Lys163 and Ser192. Catalysis depends on His235, which acts as the Proton acceptor. Glu237 is an active-site residue. Arg249 provides a ligand contact to substrate.

This sequence belongs to the MetA family.

It is found in the cytoplasm. The enzyme catalyses L-homoserine + acetyl-CoA = O-acetyl-L-homoserine + CoA. It functions in the pathway amino-acid biosynthesis; L-methionine biosynthesis via de novo pathway; O-acetyl-L-homoserine from L-homoserine: step 1/1. Its function is as follows. Transfers an acetyl group from acetyl-CoA to L-homoserine, forming acetyl-L-homoserine. The polypeptide is Homoserine O-acetyltransferase (Streptococcus pneumoniae serotype 19F (strain G54)).